A 948-amino-acid polypeptide reads, in one-letter code: UvrABC system protein A (948 aa).

Residue 33-40 participates in ATP binding; that stretch reads GLSGSGKS. Residues 252 to 279 form a C4-type zinc finger; the sequence is CPICGFSIGELEPRMFSFNSPFGACPTC. 2 ABC transporter domains span residues 309-587 and 607-935; these read WIPT…KKSL and ASDR…KYLK. 639 to 646 contributes to the ATP binding site; it reads GVSGSGKS. Residues 738 to 764 form a C4-type zinc finger; it reads CEACKGDGIIKIEMHFLPDVYVPCEVC.

This sequence belongs to the ABC transporter superfamily. UvrA family. As to quaternary structure, forms a heterotetramer with UvrB during the search for lesions.

The protein localises to the cytoplasm. Functionally, the UvrABC repair system catalyzes the recognition and processing of DNA lesions. UvrA is an ATPase and a DNA-binding protein. A damage recognition complex composed of 2 UvrA and 2 UvrB subunits scans DNA for abnormalities. When the presence of a lesion has been verified by UvrB, the UvrA molecules dissociate. The protein is UvrABC system protein A of Staphylococcus aureus (strain MRSA252).